The sequence spans 142 residues: UPF0336 protein PPA1896 (142 aa).

This sequence belongs to the UPF0336 family.

The polypeptide is UPF0336 protein PPA1896 (Cutibacterium acnes (strain DSM 16379 / KPA171202) (Propionibacterium acnes)).